Consider the following 528-residue polypeptide: Esterase PE16 (528 aa).

A PE domain is found at 1-93; it reads MSFVFAVPEM…AGWYVDAEAA (93 aa). The linker stretch occupies residues 94-143; sequence NAALVDTAATGASELGSGGRTALILGSTGTPRPPFDYMQQVYDRYIAPHY. The 221-residue stretch at 149 to 369 folds into the PE-PPE domain; it reads SGLYTPAQFQ…LRAIIELGYD (221 aa). The active site involves Ser-199. The chain crosses the membrane as a helical span at residues 503 to 523; that stretch reads IALLVFAAGIPAVAAVAILTG.

The protein belongs to the mycobacterial PE family.

The protein resides in the membrane. It carries out the reaction a hexanoate ester + H2O = an aliphatic alcohol + hexanoate + H(+). The enzyme catalyses an octanoate ester + H2O = an aliphatic alcohol + octanoate + H(+). It catalyses the reaction a butanoate ester + H2O = an aliphatic alcohol + butanoate + H(+). Esterase activity is significantly inhibited by the serine modifier phenylmethylsulfonyl fluoride (PMSF). Its function is as follows. Esterase that hydrolyzes short to medium chain fatty acid esters with the highest specific activity for p-nitrophenyl caproate (pNPC6). Has lower activity with p-nitrophenyl caprylate (pNPC8) and p-nitrophenyl butyrate (pNPC4). Has weak activity with p-nitrophenyl caprate (pNPC10) and p-nitrophenyl laurate (pNPC12). Does not possess lipolytic activity and cutinase activity. This chain is Esterase PE16, found in Mycobacterium tuberculosis (strain ATCC 25618 / H37Rv).